Here is a 361-residue protein sequence, read N- to C-terminus: Palmitoyltransferase ZDHHC2 (361 aa).

At 1–15 (MAPSGSRSFDCWRVL) the chain is on the cytoplasmic side. The chain crosses the membrane as a helical span at residues 16–36 (YWIPVLFISLIVAWSYYAYVV). Topologically, residues 37–50 (QLCIETIENMGEKT) are lumenal. Residues 51–71 (VYLLIYHLLFLMFVWSYWQTI) form a helical membrane-spanning segment. Residues 72-167 (YSKPMNPLKE…NNCVGFANYK (96 aa)) are Cytoplasmic-facing. The region spanning 124 to 174 (RYCDRCLLLKPDRCHHCSACDMCILKMDHHCPWVNNCVGFANYKFFMLFLA) is the DHHC domain. The S-palmitoyl cysteine intermediate role is filled by Cys-154. Residues 168–188 (FFMLFLAYSLLYCLFVTATDM) form a helical membrane-spanning segment. Residues 189–207 (QYFIQFWTNGLPDTQAKFH) lie on the Lumenal side of the membrane. Residues 208–228 (IMFLFFAASTFSVSLAFLFAY) traverse the membrane as a helical segment. Residues 229–361 (HCWLVCKNRS…NPALTIEKET (133 aa)) are Cytoplasmic-facing. The mediates localization to plasma membrane and recycling endosomes stretch occupies residues 296-361 (NPDPEQPSIP…NPALTIEKET (66 aa)). Over residues 299–308 (PEQPSIPPGR) the composition is skewed to pro residues. The tract at residues 299-361 (PEQPSIPPGR…NPALTIEKET (63 aa)) is disordered. A compositionally biased stretch (polar residues) spans 331–340 (SRLLNNGQTD). The Non-canonical dileucine endocytic signal motif lies at 333 to 334 (LL). The short motif at 352 to 355 (NPAL) is the NPxY-like endocytic signal element.

This sequence belongs to the DHHC palmitoyltransferase family. In terms of assembly, monomer. Homodimer. The monomeric form has a higher catalytic activity. Post-translationally, autopalmitoylated.

It localises to the endoplasmic reticulum membrane. It is found in the golgi apparatus membrane. The protein localises to the postsynaptic density. The protein resides in the postsynaptic recycling endosome membrane. Its subcellular location is the cell membrane. It carries out the reaction L-cysteinyl-[protein] + hexadecanoyl-CoA = S-hexadecanoyl-L-cysteinyl-[protein] + CoA. The catalysed reaction is L-cysteinyl-[protein] + tetradecanoyl-CoA = S-tetradecanoyl-L-cysteinyl-[protein] + CoA. It catalyses the reaction L-cysteinyl-[protein] + octadecanoyl-CoA = S-octadecanoyl-L-cysteinyl-[protein] + CoA. Functionally, palmitoyltransferase that catalyzes the addition of palmitate onto various protein substrates and is involved in a variety of cellular processes. Has no stringent fatty acid selectivity and in addition to palmitate can also transfer onto target proteins myristate from tetradecanoyl-CoA and stearate from octadecanoyl-CoA. The sequence is that of Palmitoyltransferase ZDHHC2 from Danio rerio (Zebrafish).